Reading from the N-terminus, the 585-residue chain is MAPGEKIKAKIKKNLPVTGPQAPTIKELMRWYCLNTNTHGCRRIVVSRGRLRRLLWIGFTLTAVALILWQCALLVFSFYTVSVSIKVHFRKLDFPAVTICNINPYKYSTVRHLLADLEQETREALKSLYGFPESRKRREAESWSSISEGKQPRFSHRIPLLIFDQDEKGKARDFFTGRKRKVGGSIIHKASNVMHIESKQVVGFQLNFTLFHHPMHGNCYTFNNRENETILSTSMGGSEYGLQVILYINEEEYNPFLVSSTGAKVIIHRQDEYPFVEDVGTEIETAMVTSIGMHLTESFKLSEPYSQCTEDGSDVPIRNIYNAAYSLQICLHSCFQTKMVEKCGCAQYSQPLPPAANYCNYQQHPNWMYCYYQLHRAFVQEELGCQSVCKEACSFKEWTLTTSLAQWPSVVSEKWLLPVLTWDQGRQVNKKLNKTDLAKLLIFYKDLNQRSIMESPANSIEMLLSNFGGQLGLWMSCSVVCVIEIIEVFFIDFFSIIARRQWQKAKEWWARKQAPPCPEAPRSPQGQDNPALDIDDDLPTFNSALHLPPALGTQVPGTPPPKYNTLRLERAFSNQLTDTQMLDEL.

At 1–55 (MAPGEKIKAKIKKNLPVTGPQAPTIKELMRWYCLNTNTHGCRRIVVSRGRLRRLL) the chain is on the cytoplasmic side. The helical transmembrane segment at 56 to 76 (WIGFTLTAVALILWQCALLVF) threads the bilayer. Over 77–477 (SFYTVSVSIK…GGQLGLWMSC (401 aa)) the chain is Extracellular. Cystine bridges form between C100/C219, C308/C393, C330/C389, C334/C385, C343/C370, and C345/C359. An N-linked (GlcNAc...) asparagine glycan is attached at N207. The N-linked (GlcNAc...) asparagine glycan is linked to N433. The helical transmembrane segment at 478–498 (SVVCVIEIIEVFFIDFFSIIA) threads the bilayer. The Cytoplasmic portion of the chain corresponds to 499–585 (RRQWQKAKEW…LTDTQMLDEL (87 aa)). Residues 513–534 (QAPPCPEAPRSPQGQDNPALDI) are disordered. The PY motif; recruits WW domain-containing proteins and is thereby required for ubiquitination and inhibition of the channel by NEDD4 and NEDD4L motif lies at 559–563 (PPPKY).

It belongs to the amiloride-sensitive sodium channel (TC 1.A.6) family. SCNN1G subfamily. In terms of assembly, component of the heterotrimeric epithelial sodium channel (ENaC) composed of an alpha/SCNN1A, a beta/SCNN1B and a gamma/SCNN1G subunit. An additional delta/SCNN1D subunit can replace the alpha/SCNN1A subunit to form an alternative channel with specific properties. Interacts with WWP1 (via WW domains). Interacts with WWP2 (via WW domains); inhibits the channel. Interacts with the full-length immature form of PCSK9 (pro-PCSK9); inhibits ENaC by promoting its proteasomal degradation. Interacts with BPIFA1; the interaction is indirect via SCNN1B and inhibits the proteolytic maturation of SCNN1A and SCNN1G and the activation of ENaC. Phosphorylated on serine and threonine residues. Aldosterone and insulin increase the basal level of phosphorylation. In terms of processing, ubiquitinated. Can be ubiquitinated at multiple sites and undergo monoubiquitination and polyubiquitination. Ubiquitination by NEDD4 or NEDD4L inhibits the ENaC channel through endocytosis, intracellular retention and degradation of its individual subunits. Post-translationally, ENaC is activated through the proteolytic maturation of its subunits. Furin cleaves the SCNN1G subunit first, followed by cleavage by prostasin (PRSS8), which results in a stepwise increase in the open probability of the channel due to the release of an inhibitory tract. BPIFA1, which is recruited by the SCNN1B subunit, prevents the proteolytic activation of ENaC. N-glycosylated. N-linked glycans are processed to complex type during ENaC complex assembly and transport to the plasma membrane.

Its subcellular location is the apical cell membrane. The enzyme catalyses Na(+)(in) = Na(+)(out). Originally identified and characterized by its inhibition by the diuretic drug amiloride. Its function is as follows. This is one of the three pore-forming subunits of the heterotrimeric epithelial sodium channel (ENaC), a critical regulator of sodium balance and fluid homeostasis. ENaC operates in epithelial tissues, where it mediates the electrodiffusion of sodium ions from extracellular fluid through the apical membrane of cells, with water following osmotically. It plays a key role in maintaining sodium homeostasis through electrogenic sodium reabsorption in the kidneys. Additionally, ENaC is essential for airway surface liquid homeostasis, which is crucial for proper mucus clearance. The protein is Epithelial sodium channel subunit gamma of Pan troglodytes (Chimpanzee).